We begin with the raw amino-acid sequence, 166 residues long: uncharacterized protein (166 aa).

It to M.jannaschii MJ0992.

This is an uncharacterized protein from Methanocaldococcus jannaschii (strain ATCC 43067 / DSM 2661 / JAL-1 / JCM 10045 / NBRC 100440) (Methanococcus jannaschii).